Consider the following 271-residue polypeptide: 4-hydroxy-tetrahydrodipicolinate reductase (271 aa).

NAD(+) is bound by residues 10–15 (GAGGRM), E36, 100–102 (GTT), and 124–127 (SGNM). The Proton donor/acceptor role is filled by H157. H158 lines the (S)-2,3,4,5-tetrahydrodipicolinate pocket. K161 acts as the Proton donor in catalysis. A (S)-2,3,4,5-tetrahydrodipicolinate-binding site is contributed by 167 to 168 (GT).

This sequence belongs to the DapB family.

It localises to the cytoplasm. The catalysed reaction is (S)-2,3,4,5-tetrahydrodipicolinate + NAD(+) + H2O = (2S,4S)-4-hydroxy-2,3,4,5-tetrahydrodipicolinate + NADH + H(+). It carries out the reaction (S)-2,3,4,5-tetrahydrodipicolinate + NADP(+) + H2O = (2S,4S)-4-hydroxy-2,3,4,5-tetrahydrodipicolinate + NADPH + H(+). Its pathway is amino-acid biosynthesis; L-lysine biosynthesis via DAP pathway; (S)-tetrahydrodipicolinate from L-aspartate: step 4/4. In terms of biological role, catalyzes the conversion of 4-hydroxy-tetrahydrodipicolinate (HTPA) to tetrahydrodipicolinate. The sequence is that of 4-hydroxy-tetrahydrodipicolinate reductase from Rhodopseudomonas palustris (strain BisB5).